The following is a 337-amino-acid chain: Glyceraldehyde-3-phosphate dehydrogenase (337 aa).

Residues 12 to 13 (RI), aspartate 34, and arginine 79 each bind NAD(+). D-glyceraldehyde 3-phosphate is bound by residues 150-152 (SCT), threonine 181, 210-211 (TG), and arginine 233. Cysteine 151 serves as the catalytic Nucleophile. NAD(+) is bound at residue asparagine 315.

It belongs to the glyceraldehyde-3-phosphate dehydrogenase family. Homotetramer.

The protein localises to the cytoplasm. It carries out the reaction D-glyceraldehyde 3-phosphate + phosphate + NAD(+) = (2R)-3-phospho-glyceroyl phosphate + NADH + H(+). The protein operates within carbohydrate degradation; glycolysis; pyruvate from D-glyceraldehyde 3-phosphate: step 1/5. The chain is Glyceraldehyde-3-phosphate dehydrogenase (GPD) from Podospora anserina (Pleurage anserina).